The following is a 195-amino-acid chain: MTDSVIYSMLELPTATQAQNDYGPQQKSSSSRPSCSCLVAIALGLLTAVLLSVLLYQWILCQGSNYSTCASCPSCPDRWMKYGNHCYYFSVEEKDWNSSLEFCLARDSHLLVITDNQEMSLLQVFLSEAFCWIGLRNNSGWRWEDGSPLNFSRISSNSFVQTCGAINKNGLQASSCEVPLHWVCKKCPFADQALF.

Residues 1-38 lie on the Cytoplasmic side of the membrane; it reads MTDSVIYSMLELPTATQAQNDYGPQQKSSSSRPSCSCL. The ITIM motif motif lies at 5-10; it reads VIYSML. Residues 39 to 59 form a helical; Signal-anchor for type II membrane protein membrane-spanning segment; the sequence is VAIALGLLTAVLLSVLLYQWI. At 60-195 the chain is on the extracellular side; it reads LCQGSNYSTC…KCPFADQALF (136 aa). N-linked (GlcNAc...) asparagine glycosylation occurs at Asn-65. A disulfide bridge connects residues Cys-75 and Cys-86. The C-type lectin domain maps to 82–185; sequence YGNHCYYFSV…CEVPLHWVCK (104 aa). 3 N-linked (GlcNAc...) asparagine glycosylation sites follow: Asn-97, Asn-137, and Asn-150. 2 disulfides stabilise this stretch: Cys-103–Cys-184 and Cys-163–Cys-176.

As to quaternary structure, forms a monomer and homodimer; disulfide-linked. Interacts (via ITIM motif) with PTPN11 and INPP5D. As to expression, expressed specifically on natural killer (NK) cells and T-cells, mainly CD8 T-cells.

The protein localises to the cell membrane. Plays an inhibitory role on natural killer (NK) cells and T-cell functions upon binding to their non-MHC ligands. May mediate missing self recognition by binding to a highly conserved site on classical cadherins, enabling it to monitor expression of E-cadherin/CDH1, N-cadherin/CDH2 and R-cadherin/CDH4 on target cells. In Homo sapiens (Human), this protein is Killer cell lectin-like receptor subfamily G member 1 (KLRG1).